The chain runs to 118 residues: MKHLWFFLLLVAAPRWVLSQVQLQESGPGLVKPSQTLSLTCTVSGGSISSGGYYWSWIRQHPGKGLEWIGYIYYSGSTYYNPSLKSLVTISVDTSKNQFSLKLSSVTAADTAVYYCAR.

The signal sequence occupies residues Met1–Ser19. The interval Gln20–Ser44 is framework-1. The region spanning Gln20–Arg118 is the Ig-like domain. Cys41 and Cys116 are oxidised to a cystine. Positions Gly45 to Tyr54 are complementarity-determining-1. The tract at residues Trp55–Tyr71 is framework-2. The segment at Ile72–Thr78 is complementarity-determining-2. Positions Tyr79 to Cys116 are framework-3. Residues Ala117–Arg118 are complementarity-determining-3.

Immunoglobulins are composed of two identical heavy chains and two identical light chains; disulfide-linked.

The protein resides in the secreted. The protein localises to the cell membrane. Functionally, v region of the variable domain of immunoglobulin heavy chains that participates in the antigen recognition. Immunoglobulins, also known as antibodies, are membrane-bound or secreted glycoproteins produced by B lymphocytes. In the recognition phase of humoral immunity, the membrane-bound immunoglobulins serve as receptors which, upon binding of a specific antigen, trigger the clonal expansion and differentiation of B lymphocytes into immunoglobulins-secreting plasma cells. Secreted immunoglobulins mediate the effector phase of humoral immunity, which results in the elimination of bound antigens. The antigen binding site is formed by the variable domain of one heavy chain, together with that of its associated light chain. Thus, each immunoglobulin has two antigen binding sites with remarkable affinity for a particular antigen. The variable domains are assembled by a process called V-(D)-J rearrangement and can then be subjected to somatic hypermutations which, after exposure to antigen and selection, allow affinity maturation for a particular antigen. This Homo sapiens (Human) protein is Immunoglobulin heavy variable 4-31.